An 826-amino-acid polypeptide reads, in one-letter code: Lon protease (826 aa).

The span at 1–20 shows a compositional bias: basic and acidic residues; the sequence is MSEEELNNRDTESKQEHDEN. The segment at 1-27 is disordered; it reads MSEEELNNRDTESKQEHDENNSNFEAG. One can recognise a Lon N-terminal domain in the interval 33–231; sequence LPVLPLREVI…KVHALLEKEL (199 aa). ATP is bound at residue 384–391; that stretch reads GPPGVGKT. The Lon proteolytic domain occupies 620-801; sequence ENLVGMTTGL…SEALTFTLAE (182 aa). Catalysis depends on residues Ser-707 and Lys-750.

It belongs to the peptidase S16 family. As to quaternary structure, homohexamer. Organized in a ring with a central cavity.

It localises to the cytoplasm. It carries out the reaction Hydrolysis of proteins in presence of ATP.. Its function is as follows. ATP-dependent serine protease that mediates the selective degradation of mutant and abnormal proteins as well as certain short-lived regulatory proteins. Required for cellular homeostasis and for survival from DNA damage and developmental changes induced by stress. Degrades polypeptides processively to yield small peptide fragments that are 5 to 10 amino acids long. Binds to DNA in a double-stranded, site-specific manner. This is Lon protease from Neorickettsia sennetsu (strain ATCC VR-367 / Miyayama) (Ehrlichia sennetsu).